The sequence spans 156 residues: SsrA-binding protein (156 aa).

Basic and acidic residues predominate over residues 135–150 (KRDTIKDREWQRDRSR). Residues 135–156 (KRDTIKDREWQRDRSRIMKKNT) form a disordered region.

It belongs to the SmpB family.

It is found in the cytoplasm. Its function is as follows. Required for rescue of stalled ribosomes mediated by trans-translation. Binds to transfer-messenger RNA (tmRNA), required for stable association of tmRNA with ribosomes. tmRNA and SmpB together mimic tRNA shape, replacing the anticodon stem-loop with SmpB. tmRNA is encoded by the ssrA gene; the 2 termini fold to resemble tRNA(Ala) and it encodes a 'tag peptide', a short internal open reading frame. During trans-translation Ala-aminoacylated tmRNA acts like a tRNA, entering the A-site of stalled ribosomes, displacing the stalled mRNA. The ribosome then switches to translate the ORF on the tmRNA; the nascent peptide is terminated with the 'tag peptide' encoded by the tmRNA and targeted for degradation. The ribosome is freed to recommence translation, which seems to be the essential function of trans-translation. This Legionella pneumophila (strain Paris) protein is SsrA-binding protein.